The following is a 121-amino-acid chain: Large ribosomal subunit protein bL20 (121 aa).

This sequence belongs to the bacterial ribosomal protein bL20 family.

In terms of biological role, binds directly to 23S ribosomal RNA and is necessary for the in vitro assembly process of the 50S ribosomal subunit. It is not involved in the protein synthesizing functions of that subunit. This chain is Large ribosomal subunit protein bL20, found in Wolbachia sp. subsp. Drosophila simulans (strain wRi).